Reading from the N-terminus, the 201-residue chain is Dephospho-CoA kinase (201 aa).

The 199-residue stretch at 3–201 (WIGLTGGIAC…KWLEELKNQN (199 aa)) folds into the DPCK domain. An ATP-binding site is contributed by 11 to 16 (ACGKST).

The protein belongs to the CoaE family.

It localises to the cytoplasm. It carries out the reaction 3'-dephospho-CoA + ATP = ADP + CoA + H(+). It functions in the pathway cofactor biosynthesis; coenzyme A biosynthesis; CoA from (R)-pantothenate: step 5/5. Its function is as follows. Catalyzes the phosphorylation of the 3'-hydroxyl group of dephosphocoenzyme A to form coenzyme A. The sequence is that of Dephospho-CoA kinase from Bdellovibrio bacteriovorus (strain ATCC 15356 / DSM 50701 / NCIMB 9529 / HD100).